A 701-amino-acid chain; its full sequence is Elongation factor G (701 aa).

Residues 11-287 (TKVRNIGIMA…AVIDYLPSPL (277 aa)) form the tr-type G domain. GTP-binding positions include 20-27 (AHIDAGKT), 84-88 (DTPGH), and 138-141 (NKMD).

It belongs to the TRAFAC class translation factor GTPase superfamily. Classic translation factor GTPase family. EF-G/EF-2 subfamily.

It is found in the cytoplasm. Functionally, catalyzes the GTP-dependent ribosomal translocation step during translation elongation. During this step, the ribosome changes from the pre-translocational (PRE) to the post-translocational (POST) state as the newly formed A-site-bound peptidyl-tRNA and P-site-bound deacylated tRNA move to the P and E sites, respectively. Catalyzes the coordinated movement of the two tRNA molecules, the mRNA and conformational changes in the ribosome. The protein is Elongation factor G of Mycobacterium leprae (strain Br4923).